Here is a 227-residue protein sequence, read N- to C-terminus: Cytidylate kinase (227 aa).

12 to 20 (GPGGAGKGT) contacts ATP.

The protein belongs to the cytidylate kinase family. Type 1 subfamily.

It localises to the cytoplasm. The enzyme catalyses CMP + ATP = CDP + ADP. The catalysed reaction is dCMP + ATP = dCDP + ADP. This Klebsiella pneumoniae (strain 342) protein is Cytidylate kinase.